The chain runs to 1147 residues: ATP-dependent helicase/deoxyribonuclease subunit B (1147 aa).

8–15 (GGSGAGKS) is a binding site for ATP. [4Fe-4S] cluster-binding residues include Cys-780, Cys-1092, Cys-1095, and Cys-1101.

The protein belongs to the helicase family. AddB/RexB type 1 subfamily. Heterodimer of AddA and AddB. Mg(2+) is required as a cofactor. It depends on [4Fe-4S] cluster as a cofactor.

The heterodimer acts as both an ATP-dependent DNA helicase and an ATP-dependent, dual-direction single-stranded exonuclease. Recognizes the chi site generating a DNA molecule suitable for the initiation of homologous recombination. The AddB subunit has 5' -&gt; 3' nuclease activity but not helicase activity. The chain is ATP-dependent helicase/deoxyribonuclease subunit B from Lachnoclostridium phytofermentans (strain ATCC 700394 / DSM 18823 / ISDg) (Clostridium phytofermentans).